Reading from the N-terminus, the 614-residue chain is MKGTAASALLVALSATAAQARPVVDERFPYTGPAVPIGDWVDPTINGNGKGFPRLVEPPAVKPATANPRNNVNVISLSYIPKGMHIHYQTPFGLGQLPAVRWGKDPRNLNSTAQGYSHTYDRTPSCSQVKAVTQCSQFFHEVSIDGLEPDTTYYYQIPAANGTTQSEVLSFKTSRPAGHPGSFSVAVLNDMGYTNAHGTHKQLVKAATEGTAFAWHGGDLSYADDWYSGILACADDWPVCYNGTSSTLPGGGPLPEEYKKPLPAGEIPDQGGPQGGDMSVLYESNWDLWQQWLNNVTLKIPYMVLPGNHEASCAEFDGPHNILTAYLNDDIANGTAPTDNLTYYSCPPSQRNFTAYQHRFRMPGPETGGVGNFWYSFDYGLAHFVSIDGETDFANSPEWNFAEDVTGNETLPSESETFITDSGPFGNVNGSVHETKSYEQWHWLQQDLAKVDRSKTPWVIVMSHRPMYSSAYSSYQLHVREAFEGLLLKYGVDAYLSGHIHWYERLYPLGANGTIDTAAIVNNNTYYAHNGKSITHIINGMAGNIESHSEFSDGEGLTNITALLDKVHYGFSKLTIFNETALKWELIRGDDGTVGDSLTLLKPSHVAGGKKLHS.

Residues methionine 1–proline 22 form the signal peptide. Residues isoleucine 80–proline 176 form the Fibronectin type-III domain. 13 N-linked (GlcNAc...) asparagine glycosylation sites follow: asparagine 110, asparagine 161, asparagine 242, asparagine 295, asparagine 333, asparagine 340, asparagine 352, asparagine 408, asparagine 429, asparagine 512, asparagine 523, asparagine 559, and asparagine 578. A propeptide spanning residues valine 606 to serine 614 is cleaved from the precursor.

Monomer. Requires Cu cation as cofactor. Post-translationally, glycosylated; probably with N-linked high-mannose oligosaccharides.

Its subcellular location is the secreted. The catalysed reaction is a phosphate monoester + H2O = an alcohol + phosphate. Its activity is regulated as follows. Competitively inhibited by phosphomycin and inorganic orthophosphate. This Aspergillus ficuum protein is Acid phosphatase (aphA).